The following is a 296-amino-acid chain: Formamidopyrimidine-DNA glycosylase (296 aa).

Pro-2 serves as the catalytic Schiff-base intermediate with DNA. Residue Glu-3 is the Proton donor of the active site. The active-site Proton donor; for beta-elimination activity is Lys-58. Positions 104, 126, and 169 each coordinate DNA. An FPG-type zinc finger spans residues 260–296 (SVYDREGQACGTPGCGGTVARIVQAGRSTFYCAACQK). Arg-286 (proton donor; for delta-elimination activity) is an active-site residue.

This sequence belongs to the FPG family. As to quaternary structure, monomer. It depends on Zn(2+) as a cofactor.

It carries out the reaction Hydrolysis of DNA containing ring-opened 7-methylguanine residues, releasing 2,6-diamino-4-hydroxy-5-(N-methyl)formamidopyrimidine.. The catalysed reaction is 2'-deoxyribonucleotide-(2'-deoxyribose 5'-phosphate)-2'-deoxyribonucleotide-DNA = a 3'-end 2'-deoxyribonucleotide-(2,3-dehydro-2,3-deoxyribose 5'-phosphate)-DNA + a 5'-end 5'-phospho-2'-deoxyribonucleoside-DNA + H(+). In terms of biological role, involved in base excision repair of DNA damaged by oxidation or by mutagenic agents. Acts as a DNA glycosylase that recognizes and removes damaged bases. Has a preference for oxidized purines, such as 7,8-dihydro-8-oxoguanine (8-oxoG). Has AP (apurinic/apyrimidinic) lyase activity and introduces nicks in the DNA strand. Cleaves the DNA backbone by beta-delta elimination to generate a single-strand break at the site of the removed base with both 3'- and 5'-phosphates. This Rhizobium etli (strain CIAT 652) protein is Formamidopyrimidine-DNA glycosylase.